A 308-amino-acid chain; its full sequence is Putative S-adenosyl-L-methionine-dependent methyltransferase MAB_4584c (308 aa).

Residues aspartate 131 and 160–161 contribute to the S-adenosyl-L-methionine site; that span reads DL.

This sequence belongs to the UPF0677 family.

In terms of biological role, exhibits S-adenosyl-L-methionine-dependent methyltransferase activity. This is Putative S-adenosyl-L-methionine-dependent methyltransferase MAB_4584c from Mycobacteroides abscessus (strain ATCC 19977 / DSM 44196 / CCUG 20993 / CIP 104536 / JCM 13569 / NCTC 13031 / TMC 1543 / L948) (Mycobacterium abscessus).